Here is a 392-residue protein sequence, read N- to C-terminus: F-box protein At5g65850 (392 aa).

The F-box domain occupies 29–78 (TEKSVQIPVDIIIEILLRLPAKSIATCRCVSKLWISVICRQDFTELFLTR).

In Arabidopsis thaliana (Mouse-ear cress), this protein is F-box protein At5g65850.